Reading from the N-terminus, the 106-residue chain is Integration host factor subunit alpha (106 aa).

It belongs to the bacterial histone-like protein family. As to quaternary structure, heterodimer of an alpha and a beta chain.

Its function is as follows. This protein is one of the two subunits of integration host factor, a specific DNA-binding protein that functions in genetic recombination as well as in transcriptional and translational control. The chain is Integration host factor subunit alpha from Methylobacterium radiotolerans (strain ATCC 27329 / DSM 1819 / JCM 2831 / NBRC 15690 / NCIMB 10815 / 0-1).